The sequence spans 580 residues: (3S,6E)-nerolidol synthase 1, chloroplastic (580 aa).

The N-terminal 31 residues, 1-31 (MASSSWAFFKVFNPQIAPKSISHIGQSDLMQ), are a transit peptide targeting the chloroplast. The Mg(2+) site is built by aspartate 334, aspartate 338, aspartate 478, serine 482, and glutamate 486. Positions 334 to 338 (DDIFD) match the DDXXD motif motif.

Belongs to the terpene synthase family. Tpsg subfamily. Mg(2+) is required as a cofactor. Requires Mn(2+) as cofactor.

The protein localises to the plastid. It localises to the chloroplast. The catalysed reaction is (2E,6E)-farnesyl diphosphate + H2O = (3S,6E)-nerolidol + diphosphate. Its pathway is secondary metabolite biosynthesis; terpenoid biosynthesis. Involved in monoterpene (C10) and sesquiterpene (C15) biosynthesis. Converts geranyl diphosphate (GPP) into S-linalool and farnesyl diphosphate (FPP) into (3S)-E-nerolidol. Probably not expressed in wild strawberry species. The chain is (3S,6E)-nerolidol synthase 1, chloroplastic from Fragaria vesca (Woodland strawberry).